We begin with the raw amino-acid sequence, 302 residues long: Deoxyhypusine hydroxylase (302 aa).

Methionine 1 carries the post-translational modification N-acetylmethionine. HEAT-like PBS-type repeat units follow at residues 54 to 80 (LKHELAYCLGQMRDARAIPVLADVLQD), 87 to 113 (VRHEAGEALGAIGNPEVLGLLKQYSTD), 175 to 201 (ERYRAMFALRNVGGKEAALALAEGLQC), 206 to 232 (FRHEVGYVLGQLQHEAAVPGLAATLAR), and 239 to 265 (VRHECAEALGAIARPACLAALREHIED). Residues histidine 56, histidine 89, and glutamate 90 each coordinate Fe cation. Residues histidine 208, histidine 241, and glutamate 242 each coordinate Fe cation.

This sequence belongs to the deoxyhypusine hydroxylase family. The cofactor is Fe(2+).

It catalyses the reaction [eIF5A protein]-deoxyhypusine + AH2 + O2 = [eIF5A protein]-hypusine + A + H2O. Its pathway is protein modification; eIF5A hypusination. Its function is as follows. Catalyzes the hydroxylation of the N(6)-(4-aminobutyl)-L-lysine intermediate produced by deoxyhypusine synthase/DHPS on a critical lysine of the eukaryotic translation initiation factor 5A/eIF-5A. This is the second step of the post-translational modification of that lysine into an unusual amino acid residue named hypusine. Hypusination is unique to mature eIF-5A factor and is essential for its function. The polypeptide is Deoxyhypusine hydroxylase (Mus musculus (Mouse)).